The sequence spans 327 residues: GMP reductase (327 aa).

Catalysis depends on Cys-176, which acts as the Thioimidate intermediate. 205 to 228 contributes to the NADP(+) binding site; sequence IIADGGIRTHGDIAKSIRFGASMV.

It belongs to the IMPDH/GMPR family. GuaC type 2 subfamily.

It carries out the reaction IMP + NH4(+) + NADP(+) = GMP + NADPH + 2 H(+). Its function is as follows. Catalyzes the irreversible NADPH-dependent deamination of GMP to IMP. It functions in the conversion of nucleobase, nucleoside and nucleotide derivatives of G to A nucleotides, and in maintaining the intracellular balance of A and G nucleotides. The protein is GMP reductase of Streptococcus suis (strain 05ZYH33).